Reading from the N-terminus, the 398-residue chain is Argininosuccinate synthase (398 aa).

9–17 (AYSGGLDTS) lines the ATP pocket. Tyr85 contacts L-citrulline. Gly115 is an ATP binding site. 3 residues coordinate L-aspartate: Thr117, Asn121, and Asp122. Asn121 contributes to the L-citrulline binding site. Residues Arg125, Ser173, Glu258, and Tyr270 each coordinate L-citrulline.

It belongs to the argininosuccinate synthase family. Type 1 subfamily. Homotetramer.

Its subcellular location is the cytoplasm. It catalyses the reaction L-citrulline + L-aspartate + ATP = 2-(N(omega)-L-arginino)succinate + AMP + diphosphate + H(+). It functions in the pathway amino-acid biosynthesis; L-arginine biosynthesis; L-arginine from L-ornithine and carbamoyl phosphate: step 2/3. The protein is Argininosuccinate synthase of Streptococcus pneumoniae (strain ATCC BAA-255 / R6).